The sequence spans 913 residues: Transient receptor potential cation channel protein painless (913 aa).

The Cytoplasmic portion of the chain corresponds to 1–490; the sequence is MDFNNCGFID…SSFLFLKWHR (490 aa). ANK repeat units follow at residues 154–189, 260–289, and 368–397; these read GEFT…DIDS, EYFG…DINS, and GRLV…YIGS. Residues 491–511 form a helical membrane-spanning segment; that stretch reads LSVIFYLNFLIYSLFTASIIT. Residues 512–523 are Extracellular-facing; that stretch reads YTLLKFHESDQR. A helical transmembrane segment spans residues 524–544; the sequence is ALTAFFGLLSWLGISYLILRE. The Cytoplasmic segment spans residues 545-555; the sequence is CIQWIMSPVRY. Residues 556-576 traverse the membrane as a helical segment; the sequence is FWSITNIMEVALITLSIFTCM. At 577–586 the chain is on the extracellular side; the sequence is ESSFDKETQR. A helical transmembrane segment spans residues 587 to 607; it reads VLAVFTILLVSMEFCLLVGSL. Over 608–628 the chain is Cytoplasmic; it reads PVLSISTHMLMLREVSNSFLK. A helical transmembrane segment spans residues 629-649; the sequence is SFTLYSIFVLTFSLCFYILFG. The Extracellular segment spans residues 650 to 708; the sequence is KSVEEDQSKSATPCPPLGKKEGKDEEQGFNTFTKPIEAVIKTIVMLTGEFDAGSIQFTS. The interval 656-675 is disordered; sequence QSKSATPCPPLGKKEGKDEE. Residues 709–729 form a helical membrane-spanning segment; sequence IYTYLIFLLFVIFMTIVLFNL. Residues 730 to 913 lie on the Cytoplasmic side of the membrane; the sequence is LNGLAVSDTQ…QLIQLVQDRK (184 aa).

It belongs to the transient receptor (TC 1.A.4) family. In terms of tissue distribution, present in multidendritic neurons, chordotonal neurons, a subset of cells in the central nervous system and a subset of sensory neurons in the antennal-maxillary complex. Not detected in gonads and dorsal vessels (at protein level). Expressed in peripheral neurons that extend multiple branched dendrites beneath the larval epidermis, similar to vertebrate pain receptors.

It is found in the membrane. Receptor-activated non-selective cation channel involved in detection of pain sensation due to high temperature. Involved in heat nociception by being activated by noxious temperature of 38 degrees Celsius. The chain is Transient receptor potential cation channel protein painless (pain) from Drosophila melanogaster (Fruit fly).